The following is a 400-amino-acid chain: 1-deoxy-D-xylulose 5-phosphate reductoisomerase (400 aa).

Residues threonine 10, glycine 11, serine 12, isoleucine 13, glycine 36, asparagine 38, and asparagine 124 each contribute to the NADPH site. Lysine 125 is a 1-deoxy-D-xylulose 5-phosphate binding site. Glutamate 126 is an NADPH binding site. Residue aspartate 150 coordinates Mn(2+). 1-deoxy-D-xylulose 5-phosphate contacts are provided by serine 151, glutamate 152, serine 186, and histidine 209. Residue glutamate 152 participates in Mn(2+) binding. Glycine 215 contributes to the NADPH binding site. The 1-deoxy-D-xylulose 5-phosphate site is built by serine 222, asparagine 227, lysine 228, and glutamate 231. Glutamate 231 is a Mn(2+) binding site.

This sequence belongs to the DXR family. The cofactor is Mg(2+). Mn(2+) serves as cofactor.

The enzyme catalyses 2-C-methyl-D-erythritol 4-phosphate + NADP(+) = 1-deoxy-D-xylulose 5-phosphate + NADPH + H(+). Its pathway is isoprenoid biosynthesis; isopentenyl diphosphate biosynthesis via DXP pathway; isopentenyl diphosphate from 1-deoxy-D-xylulose 5-phosphate: step 1/6. Functionally, catalyzes the NADPH-dependent rearrangement and reduction of 1-deoxy-D-xylulose-5-phosphate (DXP) to 2-C-methyl-D-erythritol 4-phosphate (MEP). The sequence is that of 1-deoxy-D-xylulose 5-phosphate reductoisomerase from Aliivibrio fischeri (strain ATCC 700601 / ES114) (Vibrio fischeri).